Reading from the N-terminus, the 351-residue chain is Thiamine-phosphate synthase (351 aa).

A unknown region spans residues 1 to 129 (MVEPYSQKEQ…AKACKQMRYQ (129 aa)). The interval 65–85 (LRAARDTPGDPGTELTHPQEE) is disordered. A thiamine-phosphate synthase region spans residues 130 to 351 (VYTLESNLMG…SQLNRIKPEL (222 aa)). Residues 177–181 (QYRDK) and N209 contribute to the 4-amino-2-methyl-5-(diphosphooxymethyl)pyrimidine site. Mg(2+) is bound by residues D210 and D229. S248 contacts 4-amino-2-methyl-5-(diphosphooxymethyl)pyrimidine. 274-276 (TPT) provides a ligand contact to 2-[(2R,5Z)-2-carboxy-4-methylthiazol-5(2H)-ylidene]ethyl phosphate. Residue K277 coordinates 4-amino-2-methyl-5-(diphosphooxymethyl)pyrimidine. Position 304 (G304) interacts with 2-[(2R,5Z)-2-carboxy-4-methylthiazol-5(2H)-ylidene]ethyl phosphate.

The protein belongs to the thiamine-phosphate synthase family. Requires Mg(2+) as cofactor.

The catalysed reaction is 2-[(2R,5Z)-2-carboxy-4-methylthiazol-5(2H)-ylidene]ethyl phosphate + 4-amino-2-methyl-5-(diphosphooxymethyl)pyrimidine + 2 H(+) = thiamine phosphate + CO2 + diphosphate. The enzyme catalyses 2-(2-carboxy-4-methylthiazol-5-yl)ethyl phosphate + 4-amino-2-methyl-5-(diphosphooxymethyl)pyrimidine + 2 H(+) = thiamine phosphate + CO2 + diphosphate. It carries out the reaction 4-methyl-5-(2-phosphooxyethyl)-thiazole + 4-amino-2-methyl-5-(diphosphooxymethyl)pyrimidine + H(+) = thiamine phosphate + diphosphate. The protein operates within cofactor biosynthesis; thiamine diphosphate biosynthesis; thiamine phosphate from 4-amino-2-methyl-5-diphosphomethylpyrimidine and 4-methyl-5-(2-phosphoethyl)-thiazole: step 1/1. Its function is as follows. Condenses 4-methyl-5-(beta-hydroxyethyl)thiazole monophosphate (THZ-P) and 2-methyl-4-amino-5-hydroxymethyl pyrimidine pyrophosphate (HMP-PP) to form thiamine monophosphate (TMP). This Nostoc punctiforme (strain ATCC 29133 / PCC 73102) protein is Thiamine-phosphate synthase.